The chain runs to 175 residues: Peptide methionine sulfoxide reductase MsrA (175 aa).

C10 is a catalytic residue.

It belongs to the MsrA Met sulfoxide reductase family.

The enzyme catalyses L-methionyl-[protein] + [thioredoxin]-disulfide + H2O = L-methionyl-(S)-S-oxide-[protein] + [thioredoxin]-dithiol. It catalyses the reaction [thioredoxin]-disulfide + L-methionine + H2O = L-methionine (S)-S-oxide + [thioredoxin]-dithiol. Has an important function as a repair enzyme for proteins that have been inactivated by oxidation. Catalyzes the reversible oxidation-reduction of methionine sulfoxide in proteins to methionine. This is Peptide methionine sulfoxide reductase MsrA from Clavibacter sepedonicus (Clavibacter michiganensis subsp. sepedonicus).